We begin with the raw amino-acid sequence, 131 residues long: Profilin (131 aa).

This sequence belongs to the profilin family. Occurs in many kinds of cells as a complex with monomeric actin in a 1:1 ratio.

The protein resides in the cytoplasm. The protein localises to the cytoskeleton. Functionally, binds to actin and affects the structure of the cytoskeleton. At high concentrations, profilin prevents the polymerization of actin, whereas it enhances it at low concentrations. By binding to PIP2, it inhibits the formation of IP3 and DG. The polypeptide is Profilin (Citrus sinensis (Sweet orange)).